We begin with the raw amino-acid sequence, 150 residues long: Regulatory protein RecX (150 aa).

Belongs to the RecX family.

The protein resides in the cytoplasm. Modulates RecA activity. The protein is Regulatory protein RecX of Acidithiobacillus ferrooxidans (strain ATCC 23270 / DSM 14882 / CIP 104768 / NCIMB 8455) (Ferrobacillus ferrooxidans (strain ATCC 23270)).